A 120-amino-acid chain; its full sequence is Large ribosomal subunit protein bL19 (120 aa).

Belongs to the bacterial ribosomal protein bL19 family.

Its function is as follows. This protein is located at the 30S-50S ribosomal subunit interface and may play a role in the structure and function of the aminoacyl-tRNA binding site. The sequence is that of Large ribosomal subunit protein bL19 from Gloeothece citriformis (strain PCC 7424) (Cyanothece sp. (strain PCC 7424)).